The following is a 318-amino-acid chain: Homoserine kinase (318 aa).

97–107 contacts ATP; sequence PIGSGLGSSAC.

The protein belongs to the GHMP kinase family. Homoserine kinase subfamily.

Its subcellular location is the cytoplasm. It carries out the reaction L-homoserine + ATP = O-phospho-L-homoserine + ADP + H(+). It participates in amino-acid biosynthesis; L-threonine biosynthesis; L-threonine from L-aspartate: step 4/5. Its function is as follows. Catalyzes the ATP-dependent phosphorylation of L-homoserine to L-homoserine phosphate. The polypeptide is Homoserine kinase (Aliivibrio fischeri (strain MJ11) (Vibrio fischeri)).